Here is a 270-residue protein sequence, read N- to C-terminus: Acyl-[acyl-carrier-protein]--UDP-N-acetylglucosamine O-acyltransferase (270 aa).

The protein belongs to the transferase hexapeptide repeat family. LpxA subfamily. In terms of assembly, homotrimer.

It is found in the cytoplasm. The catalysed reaction is a (3R)-hydroxyacyl-[ACP] + UDP-N-acetyl-alpha-D-glucosamine = a UDP-3-O-[(3R)-3-hydroxyacyl]-N-acetyl-alpha-D-glucosamine + holo-[ACP]. The protein operates within glycolipid biosynthesis; lipid IV(A) biosynthesis; lipid IV(A) from (3R)-3-hydroxytetradecanoyl-[acyl-carrier-protein] and UDP-N-acetyl-alpha-D-glucosamine: step 1/6. Its function is as follows. Involved in the biosynthesis of lipid A, a phosphorylated glycolipid that anchors the lipopolysaccharide to the outer membrane of the cell. This Sinorhizobium fredii (strain NBRC 101917 / NGR234) protein is Acyl-[acyl-carrier-protein]--UDP-N-acetylglucosamine O-acyltransferase.